A 270-amino-acid polypeptide reads, in one-letter code: Feruloyl esterase C (270 aa).

The signal sequence occupies residues 1 to 21; it reads MLRAVLLPTLLAFGAFTPVHG.

It belongs to the faeC family.

The protein resides in the secreted. It carries out the reaction feruloyl-polysaccharide + H2O = ferulate + polysaccharide.. In terms of biological role, involved in degradation of plant cell walls. Hydrolyzes the feruloyl-arabinose ester bond in arabinoxylans, and the feruloyl-galactose ester bond in pectin. Active against paranitrophenyl-acetate, methyl ferulate and wheat arabinoxylan. In Emericella nidulans (strain FGSC A4 / ATCC 38163 / CBS 112.46 / NRRL 194 / M139) (Aspergillus nidulans), this protein is Feruloyl esterase C (faeC).